Consider the following 234-residue polypeptide: Leucyl/phenylalanyl-tRNA--protein transferase (234 aa).

This sequence belongs to the L/F-transferase family.

The protein resides in the cytoplasm. The catalysed reaction is N-terminal L-lysyl-[protein] + L-leucyl-tRNA(Leu) = N-terminal L-leucyl-L-lysyl-[protein] + tRNA(Leu) + H(+). The enzyme catalyses N-terminal L-arginyl-[protein] + L-leucyl-tRNA(Leu) = N-terminal L-leucyl-L-arginyl-[protein] + tRNA(Leu) + H(+). It catalyses the reaction L-phenylalanyl-tRNA(Phe) + an N-terminal L-alpha-aminoacyl-[protein] = an N-terminal L-phenylalanyl-L-alpha-aminoacyl-[protein] + tRNA(Phe). Functions in the N-end rule pathway of protein degradation where it conjugates Leu, Phe and, less efficiently, Met from aminoacyl-tRNAs to the N-termini of proteins containing an N-terminal arginine or lysine. This Pseudoalteromonas atlantica (strain T6c / ATCC BAA-1087) protein is Leucyl/phenylalanyl-tRNA--protein transferase.